The primary structure comprises 494 residues: Cysteine--tRNA ligase (494 aa).

C29 is a Zn(2+) binding site. The 'HIGH' region signature appears at 31–41 (VTVYDHCHIGH). 3 residues coordinate Zn(2+): C209, H234, and E238. A 'KMSKS' region motif is present at residues 266–270 (KMSKS). ATP is bound at residue K269.

Belongs to the class-I aminoacyl-tRNA synthetase family. In terms of assembly, monomer. The cofactor is Zn(2+).

The protein resides in the cytoplasm. The enzyme catalyses tRNA(Cys) + L-cysteine + ATP = L-cysteinyl-tRNA(Cys) + AMP + diphosphate. This chain is Cysteine--tRNA ligase, found in Geotalea uraniireducens (strain Rf4) (Geobacter uraniireducens).